We begin with the raw amino-acid sequence, 211 residues long: Formate dehydrogenase, cytochrome b556(fdo) subunit (211 aa).

At 1–17 (MKRRDTIVRYTAPERIN) the chain is on the cytoplasmic side. H18 serves as a coordination point for heme b. Residues 18-32 (HWITAFCFILAAVSG) traverse the membrane as a helical segment. Over 33–53 (LGFLFPSFNWLMQIMGTPQLA) the chain is Periplasmic. A helical transmembrane segment spans residues 54–72 (RILHPFVGVVMFASFIIMF). Residue H57 participates in heme b binding. Residues 73 to 112 (FRYWHHNLINRDDIFWAKNIRKIVVNEEVGDTGRYNFGQK) lie on the Cytoplasmic side of the membrane. The helical transmembrane segment at 113-130 (CVFWAAIIFLVLLLVSGV) threads the bilayer. Residues 131-151 (IIWRPYFAPAFSIPVIRFALM) are Periplasmic-facing. The chain crosses the membrane as a helical span at residues 152 to 170 (LHSFAAVALIVVIMVHIYA). 2 residues coordinate heme b: H153 and H167. Topologically, residues 171-211 (ALWVKGTITAMVEGWVTSAWAKKHHPRWYREVRKTTEKKAE) are cytoplasmic.

The protein belongs to the formate dehydrogenase gamma subunit family. Formate dehydrogenase is a membrane-bound complex, formed by subunits alpha, beta and gamma. Heme is required as a cofactor.

It is found in the cell inner membrane. Allows to use formate as major electron donor during aerobic respiration. Subunit gamma is probably the cytochrome b556(FDO) component of the formate dehydrogenase. The chain is Formate dehydrogenase, cytochrome b556(fdo) subunit (fdoI) from Escherichia coli O157:H7.